A 339-amino-acid polypeptide reads, in one-letter code: Ribosomal RNA small subunit methyltransferase H (339 aa).

Residues 52-54 (GGH), Asp71, Phe98, Asp130, and Gln137 each bind S-adenosyl-L-methionine.

It belongs to the methyltransferase superfamily. RsmH family.

Its subcellular location is the cytoplasm. It catalyses the reaction cytidine(1402) in 16S rRNA + S-adenosyl-L-methionine = N(4)-methylcytidine(1402) in 16S rRNA + S-adenosyl-L-homocysteine + H(+). Functionally, specifically methylates the N4 position of cytidine in position 1402 (C1402) of 16S rRNA. The polypeptide is Ribosomal RNA small subunit methyltransferase H (Corynebacterium diphtheriae (strain ATCC 700971 / NCTC 13129 / Biotype gravis)).